A 173-amino-acid polypeptide reads, in one-letter code: MTSFLCSDTEIESDGGISRCKKIKNKPLMEKKRRARINKSLSQLKQILIQDEHKNSIQHSKWEKADILEMAVEYLQQLRSAQPCSLSPSTSSISTPPTPKEEIRNIKVPLNPIASFLNPMMQQYVAYQQLAQLSMYTQLFNNPAGVPLRADAGVTAQSPELAEKLKIEDRSRV.

The interval 21-34 is basic motif; it reads KKIKNKPLMEKKRR. The bHLH domain occupies 21-78; that stretch reads KKIKNKPLMEKKRRARINKSLSQLKQILIQDEHKNSIQHSKWEKADILEMAVEYLQQL. The interval 35 to 78 is helix-loop-helix motif; the sequence is ARINKSLSQLKQILIQDEHKNSIQHSKWEKADILEMAVEYLQQL. Residues 83 to 95 are compositionally biased toward low complexity; it reads PCSLSPSTSSIST. A disordered region spans residues 83-102; that stretch reads PCSLSPSTSSISTPPTPKEE.

Expressed mostly in the seam (stem) cells and hypodermis (hyp7), but also to a lesser extent in the intestine.

It is found in the nucleus. Its function is as follows. Probable transcription factor. During development, required for cell fate specification, probably by promoting or repressing expression of genes involved in specific cell fate. Involved in specifying lineages derived from the epidermal stem cells of the lateral ectoderm, known as seam cells. Modulates symmetric divisions of seam cells, perhaps in concert with the Wnt signaling pathway. May repress expression of homeobox genes mab-5, egl-5 and lin-39. The sequence is that of Helix-loop-helix protein lin-22 from Caenorhabditis elegans.